The chain runs to 979 residues: MKSLKAKFRKSDTNEWNKNDDRLLQAVENGDAEKVASLLGKKGASATKHDSEGKTAFHLAAAKGHVECLKVMVTHGVDVTAQDSSGHSALHVAAKNGHPECIRKLLQYKSPAENIDNSGKTALHYAAAQGCLQAVQLLCEHKSPINLKDLDGNIPLLVAVQNGHSEACHFLLDHGADVNSRDKNGRTALMLACETGSSNTVDALIKKGADLSLVDSLGHNALHYSKLSENAGIQNLLLSKISQDADLKTPTKPKQHDQVSKISSERSGTPKKRKAPPPPISPTQLSDVSSPRSITSTPLSGKESVFFAEAPFKAEISSIQENKDRLSDSTAGADSLLDISSEADQQDLLVLLQAKVASLTLHNKELQDKLQAKSPKDKEAEADLSFQSFHSTQTDLAPSPGKASDIPSSDAKSSPPVEHPAGTSTTDNDVIIRQLQDSLHDLQKRLESSEAEKKQLQDELQSQRTDTLCLNNTEISENGSDLSQKLKETQSKYEEAMKEVLSVQKQMKLGLLSQESADGYSHLREAPADEDIDTLKQDLQKAVEESARNKERVRELETKLAEKEQAEATKPPAEACEELRSSYCSVIENMNKEKAFLFEKYQQAQEEIMKLKDTLKSQMPQEAPDDSGDMKEAMNRMIDELNKQVSELSQLYREAQAELEDYRKRKSLEDAAEYIHKAEHERLMHVSNLSRAKSEEALSEMKSQYSKVLNELTQLKQLVDAHKENSVSITEHLQVITTLRTTAKEMEEKISALTGHLANKEAEVAKLEKQLAEEKAAVSDAMVPKSSYEKLQASLESEVNALATKLKESVREREKAHSEVAQVRSEVSQARREKDNIQTLLKAKEQEVTALVQKFQRAQEELAGMRRCSETSSKLEEDKDEKINEMTREVLKLKEALNSLSQLSYSTSSSKRQSQQLDLLQQQVKQLQNQLAECKKHHQEVISVYRMHLLYAVQGQMDEDVQKVLKQILTMCKNQSQKK.

N-acetylmethionine is present on methionine 1. The residue at position 11 (serine 11) is a Phosphoserine. 7 ANK repeats span residues 18–51 (KNDD…KHDS), 52–81 (EGKT…DVTA), 85–114 (SGHS…PAEN), 118–147 (SGKT…PINL), 151–180 (DGNI…DVNS), 184–213 (NGRT…DLSL), and 217–247 (LGHN…DADL). Positions 247 to 259 (LKTPTKPKQHDQV) are enriched in basic and acidic residues. The interval 247 to 299 (LKTPTKPKQHDQVSKISSERSGTPKKRKAPPPPISPTQLSDVSSPRSITSTPL) is disordered. Threonine 249 carries the phosphothreonine modification. The short motif at 270 to 276 (PKKRKAP) is the Nuclear localization signal element. Phosphoserine is present on residues serine 281, serine 286, and serine 293. Polar residues predominate over residues 282 to 299 (PTQLSDVSSPRSITSTPL). Phosphothreonine is present on residues threonine 295 and threonine 297. Phosphoserine occurs at positions 300, 304, 318, 327, 329, 340, 341, and 358. The stretch at 349 to 374 (LVLLQAKVASLTLHNKELQDKLQAKS) forms a coiled coil. 2 disordered regions span residues 392 to 429 (TQTD…TDND) and 446 to 467 (LESS…RTDT). Residues 430-943 (VIIRQLQDSL…CKKHHQEVIS (514 aa)) adopt a coiled-coil conformation. Positions 446–457 (LESSEAEKKQLQ) are enriched in basic and acidic residues. Residues 458–467 (DELQSQRTDT) show a composition bias toward polar residues. A phosphoserine mark is found at serine 513, serine 516, serine 667, serine 694, and serine 914.

Interacts with PALLD. Associates with actin. However, does not bind F-actin directly. As to expression, highly expressed in testis, where it localizes to seminiferous tubules (at protein level). Expressed in ganglion cell layer and in Muller cell fibers of the retina (at protein level). In small intestine highly expressed at the apical and lateral borders of absorptive epithelia (at protein level). In liver highly expressed along the bile canaliculi (at protein level).

The protein resides in the cytoplasm. Its subcellular location is the cytoskeleton. It localises to the stress fiber. The protein localises to the cell cortex. It is found in the cell junction. The protein resides in the nucleus. In terms of biological role, plays a role in actin regulation at the ectoplasmic specialization, a type of cell junction specific to testis. Important for establishment of sperm polarity and normal spermatid adhesion. May also promote integrity of Sertoli cell tight junctions at the blood-testis barrier. This Mus musculus (Mouse) protein is Ankycorbin (Rai14).